Reading from the N-terminus, the 591-residue chain is Aspartate--tRNA(Asp/Asn) ligase (591 aa).

Glutamate 174 is a binding site for L-aspartate. The tract at residues 198–201 (QLFK) is aspartate. An L-aspartate-binding site is contributed by arginine 220. ATP-binding positions include 220–222 (RDE) and glutamine 229. Histidine 450 serves as a coordination point for L-aspartate. ATP is bound at residue glutamate 483. Arginine 490 lines the L-aspartate pocket. 535–538 (GLDR) contacts ATP.

This sequence belongs to the class-II aminoacyl-tRNA synthetase family. Type 1 subfamily. As to quaternary structure, homodimer.

Its subcellular location is the cytoplasm. The enzyme catalyses tRNA(Asx) + L-aspartate + ATP = L-aspartyl-tRNA(Asx) + AMP + diphosphate. In terms of biological role, aspartyl-tRNA synthetase with relaxed tRNA specificity since it is able to aspartylate not only its cognate tRNA(Asp) but also tRNA(Asn). Reaction proceeds in two steps: L-aspartate is first activated by ATP to form Asp-AMP and then transferred to the acceptor end of tRNA(Asp/Asn). The protein is Aspartate--tRNA(Asp/Asn) ligase of Ectopseudomonas mendocina (strain ymp) (Pseudomonas mendocina).